Here is a 318-residue protein sequence, read N- to C-terminus: Transcription factor FER-LIKE IRON DEFICIENCY-INDUCED TRANSCRIPTION FACTOR (318 aa).

The tract at residues 90–138 is disordered; sequence FDGDSVRAGGEEDEEDYNDGDDSSATTTNNDGTRKTKTDRSRTLISERR. A compositionally biased stretch (acidic residues) spans 100-111; it reads EEDEEDYNDGDD. The span at 121-136 shows a compositional bias: basic and acidic residues; the sequence is GTRKTKTDRSRTLISE. Positions 127 to 176 constitute a bHLH domain; the sequence is TDRSRTLISERRRRGRMKDKLYALRSLVPNITKMDKASIVGDAVLYVQEL.

Homodimer. In terms of tissue distribution, expressed in roots and inflorescence, and to a lower extent, in leaves and stems. In roots, confined to the outer cell layers, specifically in the differentiation zone. Also detected in the endodermis and inner tissues of the central cylinder.

The protein localises to the nucleus. Functionally, transcription factor. Essential protein involved in iron uptake responses. Regulates FRO2 at the level of mRNA accumulation and IRT1 at the level of protein accumulation. Confers enhanced iron mobilization responses at low iron supply. In Arabidopsis thaliana (Mouse-ear cress), this protein is Transcription factor FER-LIKE IRON DEFICIENCY-INDUCED TRANSCRIPTION FACTOR (FIT).